A 478-amino-acid polypeptide reads, in one-letter code: Cytochrome c lysine N-methyltransferase 1 (478 aa).

The region spanning 32–284 (PCVSIERSQI…DRFEVFISYC (253 aa)) is the SET domain. The segment at 199-299 (TRAVVLRVYA…VHFKHTYGFF (101 aa)) is SET-like.

This sequence belongs to the class V-like SAM-binding methyltransferase superfamily.

It localises to the cytoplasm. The protein resides in the cytosol. It carries out the reaction L-lysyl-[cytochrome c] + S-adenosyl-L-methionine = N(6)-methyl-L-lysyl-[cytochrome c] + S-adenosyl-L-homocysteine + H(+). In terms of biological role, methyltransferase which mediates trimethylation of cytochrome c (CYC1). The protein is Cytochrome c lysine N-methyltransferase 1 (CTM1) of Eremothecium gossypii (strain ATCC 10895 / CBS 109.51 / FGSC 9923 / NRRL Y-1056) (Yeast).